Consider the following 215-residue polypeptide: Adenylate kinase (215 aa).

Residue 10–15 participates in ATP binding; that stretch reads GAGKGT. The tract at residues 30 to 59 is NMP; the sequence is STGDILRANVREGTELGLAAKAYMDKGELV. Residues Thr31, Arg36, 57–59, 85–88, and Gln92 each bind AMP; these read ELV and GYPR. Residues 126–162 form an LID region; sequence GRLMCKCGASYHIISNPPKKDNVCDICGGEVFQRADD. Arg127 provides a ligand contact to ATP. Cys130 and Cys132 together coordinate Zn(2+). 135 to 136 is an ATP binding site; that stretch reads SY. Positions 149 and 152 each coordinate Zn(2+). 2 residues coordinate AMP: Arg159 and Arg170. Lys198 contributes to the ATP binding site.

It belongs to the adenylate kinase family. In terms of assembly, monomer.

The protein localises to the cytoplasm. The catalysed reaction is AMP + ATP = 2 ADP. It functions in the pathway purine metabolism; AMP biosynthesis via salvage pathway; AMP from ADP: step 1/1. Its function is as follows. Catalyzes the reversible transfer of the terminal phosphate group between ATP and AMP. Plays an important role in cellular energy homeostasis and in adenine nucleotide metabolism. This Methanosarcina acetivorans (strain ATCC 35395 / DSM 2834 / JCM 12185 / C2A) protein is Adenylate kinase.